The chain runs to 236 residues: MFRRRGVTLTKALLTAVCMLAAPLTQAISVGNLTFSLPSETDFVSKRVVNNNKSARIYRIAISAIDSPGSSELRTRPVDGELLFAPRQLALQAGESEYFKFYYHGPRDNRERYYRVSFREVPTRNHTRRSPTGGVVSTEPVVVMDTILVVRPRQVQFKWSFDKVTGTVSNTGNTWFKLLIKPGCDSTEEEGDAWYLRPGDVVHQPELRQPGNHYLVYNDKFIKISDSCPAKPPSAD.

The first 27 residues, 1–27, serve as a signal peptide directing secretion; it reads MFRRRGVTLTKALLTAVCMLAAPLTQA.

This sequence belongs to the EcpB/EcpE family.

In terms of biological role, part of the ecpRABCDE operon, which encodes the E.coli common pilus (ECP). ECP is found in both commensal and pathogenic strains and plays a dual role in early-stage biofilm development and host cell recognition. This is Probable fimbrial chaperone EcpE (ecpE) from Escherichia coli (strain K12).